The sequence spans 332 residues: L-lactate dehydrogenase A-like 6A (332 aa).

Position 2 is an N-acetylalanine (Ala-2). Lys-5 and Lys-57 each carry N6-acetyllysine; alternate. Lys-5 bears the N6-succinyllysine; alternate mark. 29 to 57 (GSVGVACAISILLKGLSDELVLVDVDEGK) lines the NAD(+) pocket. A Glycyl lysine isopeptide (Lys-Gly) (interchain with G-Cter in SUMO2); alternate cross-link involves residue Lys-57. Residue Lys-81 is modified to N6-acetyllysine. Arg-99 contacts NAD(+). Arg-106 is a binding site for substrate. Lys-118 is subject to N6-acetyllysine; alternate. The residue at position 118 (Lys-118) is an N6-succinyllysine; alternate. Asn-138 is a binding site for NAD(+). Substrate-binding residues include Asn-138 and Arg-169. The active-site Proton acceptor is the His-193. An N6-acetyllysine modification is found at Lys-232. At Tyr-239 the chain carries Phosphotyrosine. Lys-243 carries the post-translational modification N6-acetyllysine. Thr-248 contributes to the substrate binding site. Thr-309 carries the phosphothreonine modification. Lys-318 is modified (N6-acetyllysine; alternate). Position 318 is an N6-succinyllysine; alternate (Lys-318). A Phosphothreonine modification is found at Thr-322.

It belongs to the LDH/MDH superfamily. LDH family. In terms of tissue distribution, testis-specific.

Its subcellular location is the cytoplasm. It carries out the reaction (S)-lactate + NAD(+) = pyruvate + NADH + H(+). It participates in fermentation; pyruvate fermentation to lactate; (S)-lactate from pyruvate: step 1/1. Its function is as follows. Catalyzes the interconversion of L-lactate and pyruvate with nicotinamide adenine dinucleotide NAD(+) as a coenzyme. Significantly increases the transcriptional activity of JUN, when overexpressed. In Homo sapiens (Human), this protein is L-lactate dehydrogenase A-like 6A (LDHAL6A).